We begin with the raw amino-acid sequence, 549 residues long: DNA 3'-5' helicase XPB (549 aa).

A required for protein stability or solubility region spans residues 1 to 130 (MTDGPLIVQS…RNKKIAPMLG (130 aa)). The Helicase ATP-binding domain occupies 190-344 (ADSFWAGGSG…DVFSLIGPKR (155 aa)). Position 203–210 (203–210 (LPCGAGKT)) interacts with ATP. The short motif at 298 to 301 (DEVH) is the DEAH box element. Residues 399–545 (VVKSILAKHP…YIIRDADDLL (147 aa)) form the Helicase C-terminal domain.

This sequence belongs to the helicase family. RAD25/XPB subfamily. Monomer. It depends on Mn(2+) as a cofactor. The cofactor is Mg(2+).

The catalysed reaction is Couples ATP hydrolysis with the unwinding of duplex DNA by translocating in the 3'-5' direction.. It catalyses the reaction ATP + H2O = ADP + phosphate + H(+). Its function is as follows. ATP-dependent 3'-5' DNA helicase, unwinds 3'-overhangs, 3'- flaps, and splayed-arm DNA substrates but not 5'-overhangs, 5'-flap substrates, 3-way junctions or Holliday junctions. Not highly efficient in vitro. Requires ATP hydrolysis for helicase activity; the ATPase activity is DNA-dependent and requires a minimum of 4 single-stranded nucleotides (nt) with 6-10 nt providing all necessary interactions for full processive unwinding. The ATPase prefers ATP over CTP or GTP, is almost inactive with TTP. DNA helicase activity requires ATP or dATP and only acts when the 3'-overhang is &gt;20 nt. Capable of unwinding a DNA:RNA hybrid if the 3'-overhang is DNA. Also catalyzes ATP-independent annealing of complementary DNA strands; annealing requires Mg(2+). This Mycobacterium tuberculosis (strain ATCC 25618 / H37Rv) protein is DNA 3'-5' helicase XPB.